Consider the following 230-residue polypeptide: Ribonuclease 3 (230 aa).

One can recognise an RNase III domain in the interval 5–134 (NDTISKVINY…LIGAIYIDGG (130 aa)). Position 47 (E47) interacts with Mg(2+). Residue D51 is part of the active site. Mg(2+) is bound by residues N120 and E123. E123 is an active-site residue. In terms of domain architecture, DRBM spans 159–228 (DPKTSLQEWT…AELILEKIKK (70 aa)).

This sequence belongs to the ribonuclease III family. In terms of assembly, homodimer. It depends on Mg(2+) as a cofactor.

It is found in the cytoplasm. It catalyses the reaction Endonucleolytic cleavage to 5'-phosphomonoester.. Its function is as follows. Digests double-stranded RNA. Involved in the processing of primary rRNA transcript to yield the immediate precursors to the large and small rRNAs (23S and 16S). Processes some mRNAs, and tRNAs when they are encoded in the rRNA operon. Processes pre-crRNA and tracrRNA of type II CRISPR loci if present in the organism. This Wolbachia pipientis subsp. Culex pipiens (strain wPip) protein is Ribonuclease 3.